The sequence spans 453 residues: Carbamoyl phosphate synthase arginine-specific small chain (453 aa).

The transit peptide at 1-28 (MFARVFKAMPARAPAFTSVNASIQSRFM) directs the protein to the mitochondrion. The Glutamine amidotransferase type-1 domain maps to 219-406 (HVAVIDCGVK…LDSVVKYKNH (188 aa)). Residue C295 is the Nucleophile of the active site. Residues H379 and E381 contribute to the active site.

It belongs to the CarA family. Heterodimer composed of 2 chains; the small (or glutamine) chain promotes the hydrolysis of glutamine to ammonia, which is used by the large (or ammonia) chain to synthesize carbamoyl phosphate.

It is found in the mitochondrion matrix. The enzyme catalyses hydrogencarbonate + L-glutamine + 2 ATP + H2O = carbamoyl phosphate + L-glutamate + 2 ADP + phosphate + 2 H(+). It carries out the reaction L-glutamine + H2O = L-glutamate + NH4(+). It functions in the pathway amino-acid biosynthesis; L-arginine biosynthesis; carbamoyl phosphate from bicarbonate: step 1/1. In terms of biological role, small subunit of the arginine-specific carbamoyl phosphate synthase (CPSase). CPSase catalyzes the formation of carbamoyl phosphate from the ammonia moiety of glutamine, carbonate, and phosphate donated by ATP, the first step of the arginine biosynthetic pathway. The small subunit (glutamine amidotransferase) binds and cleaves glutamine to supply the large subunit with the substrate ammonia. This Aspergillus niger (strain ATCC MYA-4892 / CBS 513.88 / FGSC A1513) protein is Carbamoyl phosphate synthase arginine-specific small chain (cpa1).